Consider the following 488-residue polypeptide: MPRTRTPLAAIVLAAGKGTRMKSNKAKVLHEVAGRPLAYYPVKRALELGASPVVVVVGHQAEAVEAALSAALPEAPLRFAVQEQQLGTAHAVLAAKRALRGYRGPVLILSGDTPLLRAETLEAVVSARRRARAAVSLATMTLEAPRGYGRVVRDARGRPARIVEEKDATEAERAVREVNAGLYCVDAELLWKKLAKVGTANAQREFYLTDLVPMAAQAGGVAGVEVPVEEASGVNDRVELSRANRVMVGRLAEAFMRAGVTIEDPARFDCDEGVEIGADAVIEPNVRLRGRTRVGARTRVGAGAVITDGVLADGVTVNPYTVISEAQVAEGAILGPFSRLRPGADIGPEAHVGNFVEVKKSRLGKGAKANHLAYLGDAEIGAGANIGAGTITCNYDGERKNPTRIGEGAFIGSDSILVAPIEIGAGAYVAAGSTLTDPVPAGALALGRARQVTKEGWVAQRQAEKQMKGTATGPASARKGRPAARRAS.

Residues 1-237 are pyrophosphorylase; the sequence is MPRTRTPLAA…VEEASGVNDR (237 aa). UDP-N-acetyl-alpha-D-glucosamine is bound by residues 13 to 16, Lys27, Gln82, 87 to 88, 110 to 112, Gly149, Glu164, Asn179, and Asn235; these read LAAG, GT, and SGD. Residue Asp112 participates in Mg(2+) binding. Asn235 provides a ligand contact to Mg(2+). The interval 238–258 is linker; it reads VELSRANRVMVGRLAEAFMRA. The segment at 259 to 488 is N-acetyltransferase; that stretch reads GVTIEDPARF…KGRPAARRAS (230 aa). Positions 341 and 359 each coordinate UDP-N-acetyl-alpha-D-glucosamine. The Proton acceptor role is filled by His371. The UDP-N-acetyl-alpha-D-glucosamine site is built by Tyr374 and Asn385. Acetyl-CoA-binding positions include Ala388, 394–395, Ser413, Ala431, and Arg448; that span reads NY. Residues 459 to 488 form a disordered region; the sequence is AQRQAEKQMKGTATGPASARKGRPAARRAS. The span at 478–488 shows a compositional bias: basic residues; it reads RKGRPAARRAS.

It in the N-terminal section; belongs to the N-acetylglucosamine-1-phosphate uridyltransferase family. This sequence in the C-terminal section; belongs to the transferase hexapeptide repeat family. In terms of assembly, homotrimer. Mg(2+) serves as cofactor.

It localises to the cytoplasm. It catalyses the reaction alpha-D-glucosamine 1-phosphate + acetyl-CoA = N-acetyl-alpha-D-glucosamine 1-phosphate + CoA + H(+). The enzyme catalyses N-acetyl-alpha-D-glucosamine 1-phosphate + UTP + H(+) = UDP-N-acetyl-alpha-D-glucosamine + diphosphate. The protein operates within nucleotide-sugar biosynthesis; UDP-N-acetyl-alpha-D-glucosamine biosynthesis; N-acetyl-alpha-D-glucosamine 1-phosphate from alpha-D-glucosamine 6-phosphate (route II): step 2/2. It functions in the pathway nucleotide-sugar biosynthesis; UDP-N-acetyl-alpha-D-glucosamine biosynthesis; UDP-N-acetyl-alpha-D-glucosamine from N-acetyl-alpha-D-glucosamine 1-phosphate: step 1/1. It participates in bacterial outer membrane biogenesis; LPS lipid A biosynthesis. Catalyzes the last two sequential reactions in the de novo biosynthetic pathway for UDP-N-acetylglucosamine (UDP-GlcNAc). The C-terminal domain catalyzes the transfer of acetyl group from acetyl coenzyme A to glucosamine-1-phosphate (GlcN-1-P) to produce N-acetylglucosamine-1-phosphate (GlcNAc-1-P), which is converted into UDP-GlcNAc by the transfer of uridine 5-monophosphate (from uridine 5-triphosphate), a reaction catalyzed by the N-terminal domain. This is Bifunctional protein GlmU from Anaeromyxobacter sp. (strain K).